A 334-amino-acid chain; its full sequence is Holliday junction branch migration complex subunit RuvB (334 aa).

Residues 4–184 form a large ATPase domain (RuvB-L) region; the sequence is ADRLIQPQLQ…FGIPLRLEFY (181 aa). Residues R24, G65, K68, T69, T70, 131 to 133, R174, Y184, and R221 contribute to the ATP site; that span reads EDY. T69 lines the Mg(2+) pocket. The interval 185–255 is small ATPAse domain (RuvB-S); it reads NVKDLSTIVS…VAEHALDLLD (71 aa). Residues 258-334 form a head domain (RuvB-H) region; it reads GEGFDYMDRK…YLHFGMIKPE (77 aa). The DNA site is built by R294, R313, and R318.

The protein belongs to the RuvB family. In terms of assembly, homohexamer. Forms an RuvA(8)-RuvB(12)-Holliday junction (HJ) complex. HJ DNA is sandwiched between 2 RuvA tetramers; dsDNA enters through RuvA and exits via RuvB. An RuvB hexamer assembles on each DNA strand where it exits the tetramer. Each RuvB hexamer is contacted by two RuvA subunits (via domain III) on 2 adjacent RuvB subunits; this complex drives branch migration. In the full resolvosome a probable DNA-RuvA(4)-RuvB(12)-RuvC(2) complex forms which resolves the HJ.

It is found in the cytoplasm. The catalysed reaction is ATP + H2O = ADP + phosphate + H(+). In terms of biological role, the RuvA-RuvB-RuvC complex processes Holliday junction (HJ) DNA during genetic recombination and DNA repair, while the RuvA-RuvB complex plays an important role in the rescue of blocked DNA replication forks via replication fork reversal (RFR). RuvA specifically binds to HJ cruciform DNA, conferring on it an open structure. The RuvB hexamer acts as an ATP-dependent pump, pulling dsDNA into and through the RuvAB complex. RuvB forms 2 homohexamers on either side of HJ DNA bound by 1 or 2 RuvA tetramers; 4 subunits per hexamer contact DNA at a time. Coordinated motions by a converter formed by DNA-disengaged RuvB subunits stimulates ATP hydrolysis and nucleotide exchange. Immobilization of the converter enables RuvB to convert the ATP-contained energy into a lever motion, pulling 2 nucleotides of DNA out of the RuvA tetramer per ATP hydrolyzed, thus driving DNA branch migration. The RuvB motors rotate together with the DNA substrate, which together with the progressing nucleotide cycle form the mechanistic basis for DNA recombination by continuous HJ branch migration. Branch migration allows RuvC to scan DNA until it finds its consensus sequence, where it cleaves and resolves cruciform DNA. The chain is Holliday junction branch migration complex subunit RuvB from Shewanella sp. (strain MR-7).